The sequence spans 646 residues: Chaperone protein DnaK (646 aa).

Thr-198 carries the phosphothreonine; by autocatalysis modification. Positions 603 to 646 (EQAQQAGGAEGFDPNAFQGGDAGQQKADDGVVDAEFTEVKDDKK) are disordered. Low complexity predominate over residues 618-627 (AFQGGDAGQQ).

It belongs to the heat shock protein 70 family.

Functionally, acts as a chaperone. This chain is Chaperone protein DnaK, found in Acinetobacter baumannii (strain ACICU).